A 429-amino-acid chain; its full sequence is Adenylosuccinate synthetase (429 aa).

GTP contacts are provided by residues 12–18 and 40–42; these read GDEGKGK and GHT. The Proton acceptor role is filled by D13. 2 residues coordinate Mg(2+): D13 and G40. Residues 13–16, 38–41, T128, R142, Q223, T238, and R302 each bind IMP; these read DEGK and NAGH. Catalysis depends on H41, which acts as the Proton donor. Residue 298–304 coordinates substrate; it reads VNTGRPR. GTP is bound by residues R304, 330–332, and 412–414; these read KLD and GVG.

The protein belongs to the adenylosuccinate synthetase family. Homodimer. It depends on Mg(2+) as a cofactor.

The protein localises to the cytoplasm. It carries out the reaction IMP + L-aspartate + GTP = N(6)-(1,2-dicarboxyethyl)-AMP + GDP + phosphate + 2 H(+). It functions in the pathway purine metabolism; AMP biosynthesis via de novo pathway; AMP from IMP: step 1/2. Plays an important role in the de novo pathway of purine nucleotide biosynthesis. Catalyzes the first committed step in the biosynthesis of AMP from IMP. The sequence is that of Adenylosuccinate synthetase from Corynebacterium urealyticum (strain ATCC 43042 / DSM 7109).